The following is a 188-amino-acid chain: Probable manganese efflux pump MntP (188 aa).

5 helical membrane-spanning segments follow: residues Ile3 to Gly23, Leu66 to Ile86, Trp106 to Phe128, Ala143 to Gly163, and Ile168 to Gly188.

The protein belongs to the MntP (TC 9.B.29) family.

It is found in the cell inner membrane. Its function is as follows. Probably functions as a manganese efflux pump. The sequence is that of Probable manganese efflux pump MntP from Escherichia fergusonii (strain ATCC 35469 / DSM 13698 / CCUG 18766 / IAM 14443 / JCM 21226 / LMG 7866 / NBRC 102419 / NCTC 12128 / CDC 0568-73).